The following is a 333-amino-acid chain: Ketol-acid reductoisomerase (NADP(+)) (333 aa).

In terms of domain architecture, KARI N-terminal Rossmann spans 2-182 (ANIYYDSDCD…GGGRAGILET (181 aa)). Residues 25–28 (YGSQ), Lys48, Ser51, Ser53, and 83–86 (DTIQ) contribute to the NADP(+) site. His108 is a catalytic residue. NADP(+) is bound at residue Gly134. In terms of domain architecture, KARI C-terminal knotted spans 183 to 331 (SFREETETDL…KKLRSMMKWL (149 aa)). Mg(2+)-binding residues include Asp191, Glu195, Glu227, and Glu231. A substrate-binding site is contributed by Ser252.

It belongs to the ketol-acid reductoisomerase family. The cofactor is Mg(2+).

The catalysed reaction is (2R)-2,3-dihydroxy-3-methylbutanoate + NADP(+) = (2S)-2-acetolactate + NADPH + H(+). The enzyme catalyses (2R,3R)-2,3-dihydroxy-3-methylpentanoate + NADP(+) = (S)-2-ethyl-2-hydroxy-3-oxobutanoate + NADPH + H(+). The protein operates within amino-acid biosynthesis; L-isoleucine biosynthesis; L-isoleucine from 2-oxobutanoate: step 2/4. It functions in the pathway amino-acid biosynthesis; L-valine biosynthesis; L-valine from pyruvate: step 2/4. In terms of biological role, involved in the biosynthesis of branched-chain amino acids (BCAA). Catalyzes an alkyl-migration followed by a ketol-acid reduction of (S)-2-acetolactate (S2AL) to yield (R)-2,3-dihydroxy-isovalerate. In the isomerase reaction, S2AL is rearranged via a Mg-dependent methyl migration to produce 3-hydroxy-3-methyl-2-ketobutyrate (HMKB). In the reductase reaction, this 2-ketoacid undergoes a metal-dependent reduction by NADPH to yield (R)-2,3-dihydroxy-isovalerate. The protein is Ketol-acid reductoisomerase (NADP(+)) of Leptospira interrogans serogroup Icterohaemorrhagiae serovar copenhageni (strain Fiocruz L1-130).